The sequence spans 517 residues: Glycerol kinase (517 aa).

T24 is a binding site for ADP. Residues T24, T25, and S26 each coordinate ATP. Position 24 (T24) interacts with sn-glycerol 3-phosphate. R28 is a binding site for ADP. Residues R94, E95, Y146, and D261 each contribute to the sn-glycerol 3-phosphate site. Residues R94, E95, Y146, D261, and Q262 each coordinate glycerol. ADP-binding residues include T283 and G327. The ATP site is built by T283, G327, Q331, and G428. G428 and N432 together coordinate ADP.

It belongs to the FGGY kinase family.

It carries out the reaction glycerol + ATP = sn-glycerol 3-phosphate + ADP + H(+). It participates in polyol metabolism; glycerol degradation via glycerol kinase pathway; sn-glycerol 3-phosphate from glycerol: step 1/1. Its activity is regulated as follows. Inhibited by fructose 1,6-bisphosphate (FBP). Key enzyme in the regulation of glycerol uptake and metabolism. Catalyzes the phosphorylation of glycerol to yield sn-glycerol 3-phosphate. The polypeptide is Glycerol kinase (Mycobacterium tuberculosis (strain ATCC 25177 / H37Ra)).